We begin with the raw amino-acid sequence, 571 residues long: L-erythrulose 1-kinase (571 aa).

A DhaK domain is found at 7 to 331 (SPDDFADEAV…WTAPVETPAY (325 aa)). His217 (tele-hemiaminal-histidine intermediate) is an active-site residue. The DhaL domain maps to 367 to 567 (RNIVAVLETF…FAMLMKALGE (201 aa)). Residues 396-402 (DGDHGQG), 442-443 (TS), Gly484, Arg539, and 552-554 (DPG) each bind ATP.

It carries out the reaction L-erythrulose + ATP = L-erythrulose 1-phosphate + ADP + H(+). The protein operates within carbohydrate metabolism; L-threitol degradation. Functionally, kinase that has a preference for L-erythrulose, producing L-erythrulose-1P. Involved in the degradation pathway of L-threitol, that allows M.smegmatis to grow on this compound as the sole carbon source. Is also able to phosphorylate D-erythrulose and dihydroxyacetone in vitro. This Mycolicibacterium smegmatis (strain ATCC 700084 / mc(2)155) (Mycobacterium smegmatis) protein is L-erythrulose 1-kinase.